Reading from the N-terminus, the 433-residue chain is MDIDGEDVSRRLHVKFVTKLDSPFKVPVNSVAIPSNVTRLGLSSIVNSIIESENPEWKTEPFDFLIDGELIRMSLEEFLLAKGISAERTLEIEYIRAVTPRKEEEPSLHDDWVSAVNGSSPRFILTGCYDGLGRVWSSAGSCSHILEGHSGAISSVALVNSNDAETVTVATASKDRTLRLFKFDPAESVDSTTKVRAYKILRGHKASVQSVSAQKSGNMVCSSSWDCTINLWNTNESTSEGESVSVKKRKGNNQAEESQSEGEAVTSLVGHTQCVSSVVWPEHDVIYSSSWDHSVRRWDVETGKDSLNLFCGKALNTVDVGGESSALIAAGGSDPILRVWDPRKPGTSAPVFQFSSHSSWISACKWHKSSWFHLLSASYDGKIMLWDLRTAWPLSVIDTHNDKVLSADWWKGESVVSGGADSNLRISSGIAIS.

M1 is subject to N-acetylmethionine. The interval 12-96 is ubiquitin-like (UBL) domain; the sequence is LHVKFVTKLD…ERTLEIEYIR (85 aa). WD repeat units lie at residues 108 to 146, 148 to 191, 203 to 242, 270 to 308, 310 to 350, 356 to 396, and 399 to 433; these read LHDD…SHIL, GHSG…SVDS, GHKA…SEGE, GHTQ…DSLN, FCGK…TSAP, SHSS…PLSV, and THND…IAIS. The segment at 238-263 is disordered; it reads TSEGESVSVKKRKGNNQAEESQSEGE.

The protein belongs to the WD repeat WDR12/YTM1 family. As to quaternary structure, interacts with PES. Interacts with BOP1.

Its subcellular location is the nucleus. It is found in the nucleolus. The protein localises to the nucleoplasm. Its function is as follows. Required for maturation of ribosomal RNAs and formation of the large ribosomal subunit. The polypeptide is Ribosome biogenesis protein WDR12 homolog (Arabidopsis thaliana (Mouse-ear cress)).